The sequence spans 127 residues: Small ribosomal subunit protein uS11 (127 aa).

This sequence belongs to the universal ribosomal protein uS11 family. As to quaternary structure, part of the 30S ribosomal subunit. Interacts with proteins S7 and S18. Binds to IF-3.

Functionally, located on the platform of the 30S subunit, it bridges several disparate RNA helices of the 16S rRNA. Forms part of the Shine-Dalgarno cleft in the 70S ribosome. This Flavobacterium psychrophilum (strain ATCC 49511 / DSM 21280 / CIP 103535 / JIP02/86) protein is Small ribosomal subunit protein uS11.